The primary structure comprises 385 residues: Arginine biosynthesis bifunctional protein ArgJ (385 aa).

Substrate contacts are provided by threonine 142, lysine 168, threonine 179, glutamate 259, asparagine 380, and threonine 385. Threonine 179 (nucleophile) is an active-site residue.

It belongs to the ArgJ family. In terms of assembly, heterotetramer of two alpha and two beta chains.

It is found in the cytoplasm. It carries out the reaction N(2)-acetyl-L-ornithine + L-glutamate = N-acetyl-L-glutamate + L-ornithine. The catalysed reaction is L-glutamate + acetyl-CoA = N-acetyl-L-glutamate + CoA + H(+). Its pathway is amino-acid biosynthesis; L-arginine biosynthesis; L-ornithine and N-acetyl-L-glutamate from L-glutamate and N(2)-acetyl-L-ornithine (cyclic): step 1/1. The protein operates within amino-acid biosynthesis; L-arginine biosynthesis; N(2)-acetyl-L-ornithine from L-glutamate: step 1/4. Its function is as follows. Catalyzes two activities which are involved in the cyclic version of arginine biosynthesis: the synthesis of N-acetylglutamate from glutamate and acetyl-CoA as the acetyl donor, and of ornithine by transacetylation between N(2)-acetylornithine and glutamate. This Leptospira interrogans serogroup Icterohaemorrhagiae serovar copenhageni (strain Fiocruz L1-130) protein is Arginine biosynthesis bifunctional protein ArgJ.